We begin with the raw amino-acid sequence, 364 residues long: Protein PTOV1 homolog (364 aa).

Residues 187 to 207 form a disordered region; the sequence is AKRKPGVKTPKQPQPEEPPPV.

It belongs to the Mediator complex subunit 25 family. PTOV1 subfamily.

The polypeptide is Protein PTOV1 homolog (Drosophila melanogaster (Fruit fly)).